The primary structure comprises 757 residues: Primary amine oxidase (757 aa).

A signal peptide spans 1–30 (MGSPSLYSARKTTLALAVALSFAWQAPVFA). Substrate is bound by residues 411–422 (YLDSGDYGMGTL) and 493–498 (VGNYDY). Residue Asp413 is the Proton acceptor of the active site. Tyr496 functions as the Schiff-base intermediate with substrate; via topaquinone in the catalytic mechanism. Position 496 is a 2',4',5'-topaquinone (Tyr496). Residues His554 and His556 each coordinate Cu cation. 9 residues coordinate Ca(2+): Asp563, Leu564, Asp565, Glu603, Tyr697, Asp700, Glu702, Asp708, and Ala709. A Mn(2+)-binding site is contributed by Asp563. Residue Asp565 participates in Mn(2+) binding. The tract at residues 680 to 701 (PEGKYPNRSTHDTGLGQYSKDN) is disordered. Position 708 (Asp708) interacts with Mn(2+). A Cu cation-binding site is contributed by His719.

This sequence belongs to the copper/topaquinone oxidase family. In terms of assembly, homodimer. Cu cation is required as a cofactor. The cofactor is Zn(2+). Ca(2+) serves as cofactor. Requires L-topaquinone as cofactor. It depends on Mn(2+) as a cofactor. Post-translationally, topaquinone (TPQ) is generated by copper-dependent autoxidation of a specific tyrosyl residue.

It is found in the periplasm. The catalysed reaction is a primary methyl amine + O2 + H2O = an aldehyde + H2O2 + NH4(+). It carries out the reaction 2-phenylethylamine + O2 + H2O = 2-phenylacetaldehyde + H2O2 + NH4(+). Its pathway is amino-acid degradation; L-phenylalanine degradation; phenylacetate from L-phenylalanine: step 2/3. Inhibited by 2-hydrazinopyridine. Its function is as follows. The enzyme prefers aromatic over aliphatic amines. The polypeptide is Primary amine oxidase (tynA) (Escherichia coli (strain K12)).